The chain runs to 395 residues: L-lactate dehydrogenase (395 aa).

In terms of domain architecture, FMN hydroxy acid dehydrogenase spans 1-380 (MIISAASDYR…SKDSLVQELS (380 aa)). Y24 contributes to the substrate binding site. FMN is bound by residues S106 and Q127. Y129 contacts substrate. T155 is a binding site for FMN. R164 is a binding site for substrate. K251 is an FMN binding site. H275 (proton acceptor) is an active-site residue. R278 is a substrate binding site. FMN is bound at residue 306–330 (DSGIRNGLDVVRMIALGADSVLLGR).

Belongs to the FMN-dependent alpha-hydroxy acid dehydrogenase family. FMN is required as a cofactor.

The protein localises to the cell inner membrane. The catalysed reaction is (S)-lactate + A = pyruvate + AH2. Catalyzes the conversion of L-lactate to pyruvate. Is coupled to the respiratory chain. This is L-lactate dehydrogenase from Enterobacter sp. (strain 638).